We begin with the raw amino-acid sequence, 341 residues long: Malate dehydrogenase, mitochondrial (341 aa).

Residues 35-41 (GAGGGIG) and D61 each bind NAD(+). Substrate contacts are provided by R109 and R115. N122 is a binding site for NAD(+). Substrate contacts are provided by N147 and R181. Residue H205 is the Proton acceptor of the active site. Position 254 (M254) interacts with NAD(+).

This sequence belongs to the LDH/MDH superfamily. MDH type 1 family. Homodimer.

The protein resides in the mitochondrion matrix. It carries out the reaction (S)-malate + NAD(+) = oxaloacetate + NADH + H(+). The polypeptide is Malate dehydrogenase, mitochondrial (MDH1) (Schizosaccharomyces pombe (strain 972 / ATCC 24843) (Fission yeast)).